Consider the following 182-residue polypeptide: Crossover junction endodeoxyribonuclease RuvC (182 aa).

Residues Asp-7, Glu-67, and Asp-139 contribute to the active site. 3 residues coordinate Mg(2+): Asp-7, Glu-67, and Asp-139.

Belongs to the RuvC family. In terms of assembly, homodimer which binds Holliday junction (HJ) DNA. The HJ becomes 2-fold symmetrical on binding to RuvC with unstacked arms; it has a different conformation from HJ DNA in complex with RuvA. In the full resolvosome a probable DNA-RuvA(4)-RuvB(12)-RuvC(2) complex forms which resolves the HJ. Mg(2+) serves as cofactor.

The protein localises to the cytoplasm. It carries out the reaction Endonucleolytic cleavage at a junction such as a reciprocal single-stranded crossover between two homologous DNA duplexes (Holliday junction).. Functionally, the RuvA-RuvB-RuvC complex processes Holliday junction (HJ) DNA during genetic recombination and DNA repair. Endonuclease that resolves HJ intermediates. Cleaves cruciform DNA by making single-stranded nicks across the HJ at symmetrical positions within the homologous arms, yielding a 5'-phosphate and a 3'-hydroxyl group; requires a central core of homology in the junction. The consensus cleavage sequence is 5'-(A/T)TT(C/G)-3'. Cleavage occurs on the 3'-side of the TT dinucleotide at the point of strand exchange. HJ branch migration catalyzed by RuvA-RuvB allows RuvC to scan DNA until it finds its consensus sequence, where it cleaves and resolves the cruciform DNA. The sequence is that of Crossover junction endodeoxyribonuclease RuvC from Bordetella pertussis (strain Tohama I / ATCC BAA-589 / NCTC 13251).